A 185-amino-acid chain; its full sequence is Prenylated Rab acceptor protein 1 (185 aa).

Topologically, residues 1 to 78 are cytoplasmic; the sequence is MAAQKDQQKD…RNVEYYQSNY (78 aa). The interval 30–54 is required for interaction with prenylated RAB3A and VAMP2; sequence AGREWLERRRATIRPWGSFVDQRRF. 2 consecutive transmembrane segments (helical) span residues 79 to 94 and 95 to 112; these read VFVF…VTSP and MLLV…ILYL. Residues 113-131 are Cytoplasmic-facing; sequence RTLQSKFVLFGREVSPAHQ. Helical transmembrane passes span 132–148 and 149–165; these read YALA…LAGA and GSAV…VIGS. Residues 165–185 form a required for interaction with GDI1 region; that stretch reads SHAAFHQIEAVDGEELQMEPV. At 166–185 the chain is on the cytoplasmic side; that stretch reads HAAFHQIEAVDGEELQMEPV. The required for interaction with prenylated RAB3A and VAMP2 stretch occupies residues 175–185; the sequence is VDGEELQMEPV. The homodimerization stretch occupies residues 175 to 185; that stretch reads VDGEELQMEPV.

The protein belongs to the PRA1 family. Homodimer. Interacts with VAMP2 (synaptobrevin-2), prenylated Rab proteins, GDI1, NRDG1 and PCLO.

The protein localises to the cell membrane. The protein resides in the cytoplasm. It is found in the golgi apparatus. Its subcellular location is the cytoplasmic vesicle. It localises to the secretory vesicle. The protein localises to the synaptic vesicle. In terms of biological role, general Rab protein regulator required for vesicle formation from the Golgi complex. May control vesicle docking and fusion by mediating the action of Rab GTPases to the SNARE complexes. In addition it inhibits the removal of Rab GTPases from the membrane by GDI1. The polypeptide is Prenylated Rab acceptor protein 1 (RABAC1) (Sus scrofa (Pig)).